A 524-amino-acid chain; its full sequence is Alkaline phosphatase, tissue-nonspecific isozyme (524 aa).

The N-terminal stretch at 1–17 is a signal peptide; the sequence is MILPFLVLAIGTCLTNS. Aspartate 60 contributes to the Mg(2+) binding site. Residues aspartate 60 and serine 110 each coordinate Zn(2+). The active-site Phosphoserine intermediate is serine 110. A Phosphoserine modification is found at serine 110. Cysteine 139 and cysteine 201 are joined by a disulfide. Residue asparagine 140 is glycosylated (N-linked (GlcNAc...) asparagine). Threonine 173 serves as a coordination point for Mg(2+). Asparagine 230 carries N-linked (GlcNAc...) asparagine glycosylation. Residue glutamate 235 participates in Ca(2+) binding. Asparagine 271 carries an N-linked (GlcNAc...) asparagine glycan. Ca(2+)-binding residues include phenylalanine 290 and glutamate 291. A glycan (N-linked (GlcNAc...) asparagine) is linked at asparagine 303. Aspartate 306 is a Ca(2+) binding site. Glutamate 332 provides a ligand contact to Mg(2+). Aspartate 337, histidine 341, aspartate 378, and histidine 379 together coordinate Zn(2+). N-linked (GlcNAc...) asparagine glycosylation is present at asparagine 430. Histidine 454 serves as a coordination point for Zn(2+). Cysteine 489 and cysteine 497 form a disulfide bridge. The GPI-anchor amidated serine moiety is linked to residue serine 501. Residues 502 to 524 constitute a propeptide, removed in mature form; sequence SASSPSPGALLLPLALFPLRTLF.

The protein belongs to the alkaline phosphatase family. As to quaternary structure, homodimer. It depends on Mg(2+) as a cofactor. Zn(2+) serves as cofactor. The cofactor is Ca(2+). In terms of processing, N-glycosylated.

Its subcellular location is the cell membrane. The protein localises to the extracellular vesicle membrane. It localises to the mitochondrion membrane. It is found in the mitochondrion intermembrane space. The enzyme catalyses a phosphate monoester + H2O = an alcohol + phosphate. The catalysed reaction is diphosphate + H2O = 2 phosphate + H(+). It catalyses the reaction pyridoxal 5'-phosphate + H2O = pyridoxal + phosphate. It carries out the reaction phosphoethanolamine + H2O = ethanolamine + phosphate. The enzyme catalyses N-phosphocreatine + H2O = creatine + phosphate. The catalysed reaction is ATP + H2O = ADP + phosphate + H(+). It catalyses the reaction ADP + H2O = AMP + phosphate + H(+). It carries out the reaction AMP + H2O = adenosine + phosphate. With respect to regulation, phosphatase activity is specifically inhibited by 5-((5-chloro-2-methoxyphenyl)sulfonamido)nicotinamide (SBI-425). Its function is as follows. Alkaline phosphatase that metabolizes various phosphate compounds and plays a key role in skeletal mineralization and adaptive thermogenesis. Has broad substrate specificity and can hydrolyze a considerable variety of compounds: however, only a few substrates, such as diphosphate (inorganic pyrophosphate; PPi), pyridoxal 5'-phosphate (PLP) and N-phosphocreatine are natural substrates. Plays an essential role in skeletal and dental mineralization via its ability to hydrolyze extracellular diphosphate, a potent mineralization inhibitor, to phosphate: it thereby promotes hydroxyapatite crystal formation and increases inorganic phosphate concentration. Acts in a non-redundant manner with PHOSPHO1 in skeletal mineralization: while PHOSPHO1 mediates the initiation of hydroxyapatite crystallization in the matrix vesicles (MVs), ALPL/TNAP catalyzes the spread of hydroxyapatite crystallization in the extracellular matrix. Also promotes dephosphorylation of osteopontin (SSP1), an inhibitor of hydroxyapatite crystallization in its phosphorylated state; it is however unclear whether ALPL/TNAP mediates SSP1 dephosphorylation via a direct or indirect manner. Catalyzes dephosphorylation of PLP to pyridoxal (PL), the transportable form of vitamin B6, in order to provide a sufficient amount of PLP in the brain, an essential cofactor for enzymes catalyzing the synthesis of diverse neurotransmitters. Additionally, also able to mediate ATP degradation in a stepwise manner to adenosine, thereby regulating the availability of ligands for purinergic receptors. Also capable of dephosphorylating microbial products, such as lipopolysaccharides (LPS) as well as other phosphorylated small-molecules, such as poly-inosine:cytosine (poly I:C). Acts as a key regulator of adaptive thermogenesis as part of the futile creatine cycle: localizes to the mitochondria of thermogenic fat cells and acts by mediating hydrolysis of N-phosphocreatine to initiate a futile cycle of creatine dephosphorylation and phosphorylation. During the futile creatine cycle, creatine and N-phosphocreatine are in a futile cycle, which dissipates the high energy charge of N-phosphocreatine as heat without performing any mechanical or chemical work. The polypeptide is Alkaline phosphatase, tissue-nonspecific isozyme (Alpl) (Rattus norvegicus (Rat)).